We begin with the raw amino-acid sequence, 1080 residues long: Ubiquitin-activating enzyme E1 1 (1080 aa).

The segment covering 1–14 (MLHKRASEANDKND) has biased composition (basic and acidic residues). Disordered stretches follow at residues 1-20 (MLHKRASEANDKNDNTIIGS) and 29-50 (RIDFTESSSDKSSSILASGSSR). Over residues 38–49 (DKSSSILASGSS) the composition is skewed to low complexity. Residues alanine 502, aspartate 528, arginine 539, lysine 552, and 600 to 601 (DN) each bind ATP. Cysteine 656 (glycyl thioester intermediate) is an active-site residue.

It belongs to the ubiquitin-activating E1 family. In terms of assembly, monomer. Expressed in leaves, flowers, roots and stems. Detected in germinating seeds, cotyledons, hypocotyls, vascular tissues, anthers, filaments, pollen, style, stigma, sepals, petals, ovary, developing ovules, funiculi and silique walls.

The enzyme catalyses ATP + ubiquitin + [E1 ubiquitin-activating enzyme]-L-cysteine = AMP + diphosphate + S-ubiquitinyl-[E1 ubiquitin-activating enzyme]-L-cysteine.. It participates in protein modification; protein ubiquitination. Activates ubiquitin by first adenylating its C-terminal glycine residue with ATP, and thereafter linking this residue to the side chain of a cysteine residue in E1, yielding a ubiquitin-E1 thioester and free AMP. The chain is Ubiquitin-activating enzyme E1 1 (UBA1) from Arabidopsis thaliana (Mouse-ear cress).